Reading from the N-terminus, the 946-residue chain is Bifunctional glutamine synthetase adenylyltransferase/adenylyl-removing enzyme (946 aa).

The tract at residues 1-440 (MKPLSSPLQQ…VFNELIGDDE (440 aa)) is adenylyl removase. The interval 449 to 946 (SEQWRELWQD…ASWQKWLVEE (498 aa)) is adenylyl transferase.

This sequence belongs to the GlnE family. Requires Mg(2+) as cofactor.

It carries out the reaction [glutamine synthetase]-O(4)-(5'-adenylyl)-L-tyrosine + phosphate = [glutamine synthetase]-L-tyrosine + ADP. The enzyme catalyses [glutamine synthetase]-L-tyrosine + ATP = [glutamine synthetase]-O(4)-(5'-adenylyl)-L-tyrosine + diphosphate. Functionally, involved in the regulation of glutamine synthetase GlnA, a key enzyme in the process to assimilate ammonia. When cellular nitrogen levels are high, the C-terminal adenylyl transferase (AT) inactivates GlnA by covalent transfer of an adenylyl group from ATP to specific tyrosine residue of GlnA, thus reducing its activity. Conversely, when nitrogen levels are low, the N-terminal adenylyl removase (AR) activates GlnA by removing the adenylyl group by phosphorolysis, increasing its activity. The regulatory region of GlnE binds the signal transduction protein PII (GlnB) which indicates the nitrogen status of the cell. This chain is Bifunctional glutamine synthetase adenylyltransferase/adenylyl-removing enzyme, found in Shigella sonnei (strain Ss046).